The chain runs to 311 residues: Mycinamicin-resistance protein MyrB (311 aa).

N27, L29, G54, E75, and D98 together coordinate S-adenosyl-L-methionine. Residues 272 to 311 are disordered; that stretch reads PAPAGRSVRARPGSVGPDRSLPPRGLRSGPPRARRRGGGA. Over residues 293–302 the composition is skewed to low complexity; sequence PPRGLRSGPP.

It belongs to the class I-like SAM-binding methyltransferase superfamily. rRNA adenine N(6)-methyltransferase family.

In terms of biological role, confers resistance to macrolide, lincosamide and streptogramin B antibiotics. The protein is Mycinamicin-resistance protein MyrB (myrB) of Micromonospora griseorubida.